Reading from the N-terminus, the 368-residue chain is Phospho-N-acetylmuramoyl-pentapeptide-transferase (368 aa).

The next 9 membrane-spanning stretches (helical) occupy residues 30–50, 72–92, 99–119, 135–155, 170–190, 201–221, 238–258, 265–286, and 345–365; these read AAAITALLITLLIGPKLIAYL, LPTMGGLLIIFAFELSVFLWA, VWLVMVAVLWMGAVGFLDDYL, LIGQVLLGLLVGLYAWFDPSM, LTINYGIFYVPVVIFIITAIS, GLAAGTSAIAFIGLAGFAYLA, GGEVAIVSMALVMACVGFLWF, IIMGDTGSLALGSAMAVIALLI, and KIVIRFWIMAILFFLASLMTL.

This sequence belongs to the glycosyltransferase 4 family. MraY subfamily. It depends on Mg(2+) as a cofactor.

Its subcellular location is the cell inner membrane. The catalysed reaction is UDP-N-acetyl-alpha-D-muramoyl-L-alanyl-gamma-D-glutamyl-meso-2,6-diaminopimeloyl-D-alanyl-D-alanine + di-trans,octa-cis-undecaprenyl phosphate = di-trans,octa-cis-undecaprenyl diphospho-N-acetyl-alpha-D-muramoyl-L-alanyl-D-glutamyl-meso-2,6-diaminopimeloyl-D-alanyl-D-alanine + UMP. It functions in the pathway cell wall biogenesis; peptidoglycan biosynthesis. Its function is as follows. Catalyzes the initial step of the lipid cycle reactions in the biosynthesis of the cell wall peptidoglycan: transfers peptidoglycan precursor phospho-MurNAc-pentapeptide from UDP-MurNAc-pentapeptide onto the lipid carrier undecaprenyl phosphate, yielding undecaprenyl-pyrophosphoryl-MurNAc-pentapeptide, known as lipid I. This is Phospho-N-acetylmuramoyl-pentapeptide-transferase from Chlorobium chlorochromatii (strain CaD3).